The following is a 272-amino-acid chain: Energy-coupling factor transporter ATP-binding protein EcfA1 (272 aa).

An ABC transporter domain is found at 5 to 239 (IKIDNLKYSY…RKALHENGLE (235 aa)). Residue 37–44 (GHNGSGKS) coordinates ATP. The active-site Proton acceptor is E163.

It belongs to the ABC transporter superfamily. Energy-coupling factor EcfA family. In terms of assembly, forms a stable energy-coupling factor (ECF) transporter complex probably composed of 2 membrane-embedded substrate-binding proteins (S component), 2 ATP-binding proteins (A component) and 2 transmembrane proteins (T component). This complex interacts with a number of substrate-specific components, including FolT, PanT and RibU for 5-formyltetrahydrofolate, pantothenate and riboflavin respectively.

Its subcellular location is the cell membrane. Functionally, ATP-binding (A) component of a common energy-coupling factor (ECF) ABC-transporter complex. Unlike classic ABC transporters this ECF transporter provides the energy necessary to transport a number of different substrates including 5-formyltetrahydrofolate, pantothenate and riboflavin. Expression of the complex plus FolT in E.coli allows 5-formyltetrahydrofolate uptake; 5-formyltetrahydrofolate is not taken up in the absence of FolT or the EcfA1A2T complex. This is Energy-coupling factor transporter ATP-binding protein EcfA1 from Leuconostoc mesenteroides subsp. mesenteroides (strain ATCC 8293 / DSM 20343 / BCRC 11652 / CCM 1803 / JCM 6124 / NCDO 523 / NBRC 100496 / NCIMB 8023 / NCTC 12954 / NRRL B-1118 / 37Y).